A 430-amino-acid polypeptide reads, in one-letter code: 3-phosphoshikimate 1-carboxyvinyltransferase (430 aa).

Positions 20, 21, and 25 each coordinate 3-phosphoshikimate. Lys-20 serves as a coordination point for phosphoenolpyruvate. Gly-92 and Arg-120 together coordinate phosphoenolpyruvate. Ser-166, Gln-168, Asp-312, and Lys-339 together coordinate 3-phosphoshikimate. A phosphoenolpyruvate-binding site is contributed by Gln-168. The Proton acceptor role is filled by Asp-312. Phosphoenolpyruvate contacts are provided by Arg-343 and Arg-387.

This sequence belongs to the EPSP synthase family. Monomer.

It localises to the cytoplasm. It catalyses the reaction 3-phosphoshikimate + phosphoenolpyruvate = 5-O-(1-carboxyvinyl)-3-phosphoshikimate + phosphate. The protein operates within metabolic intermediate biosynthesis; chorismate biosynthesis; chorismate from D-erythrose 4-phosphate and phosphoenolpyruvate: step 6/7. Functionally, catalyzes the transfer of the enolpyruvyl moiety of phosphoenolpyruvate (PEP) to the 5-hydroxyl of shikimate-3-phosphate (S3P) to produce enolpyruvyl shikimate-3-phosphate and inorganic phosphate. The chain is 3-phosphoshikimate 1-carboxyvinyltransferase from Lactococcus lactis subsp. cremoris (strain SK11).